The following is a 342-amino-acid chain: Cyclin-D3-1 (342 aa).

A compositionally biased stretch (polar residues) spans 322-334 (VGSPATNYESSAS). The segment at 322-342 (VGSPATNYESSASSKRRRICR) is disordered.

The protein belongs to the cyclin family. Cyclin D subfamily.

In Oryza sativa subsp. japonica (Rice), this protein is Cyclin-D3-1 (CYCD3-1).